A 283-amino-acid polypeptide reads, in one-letter code: Lolitrem B biosynthesis cluster protein S (283 aa).

The first 27 residues, 1–27, serve as a signal peptide directing secretion; that stretch reads MSRSDWIFISLQGFFCLAGVIWKSREG. Helical transmembrane passes span 73–93, 112–132, 157–177, 219–239, and 250–270; these read WFWLHLMLYIAQLVGLILIIL, LGYLSYTVGLSTAFPVFSLWI, IFWCTGISHIGIFMVAIVATL, MTGTSSGFFLTVGLFSQALEA, and VRMFFVSLIAGPAAGSADVLL.

This sequence belongs to the ltmS family.

It is found in the membrane. Part of the gene cluster that mediates the biosynthesis of lolitrems, indole-diterpene mycotoxins that are potent tremorgens in mammals, and are synthesized by clavicipitaceous fungal endophytes in association with their grass hosts. The geranylgeranyl diphosphate (GGPP) synthase ltmG is proposed to catalyze the first step in lolitrem biosynthesis. LtmG catalyzes a series of iterative condensations of isopentenyl diphosphate (IPP) with dimethylallyl diphosphate (DMAPP), geranyl diphosphate (GPP), and farnesyl diphosphate (FPP), to form GGPP. GGPP then condenses with indole-3-glycerol phosphate to form 3-geranylgeranylindole, an acyclic intermediate, to be incorporated into paxilline. Either ltmG or ltmC could be responsible for this step, as both are putative prenyl transferases. The FAD-dependent monooxygenase ltmM then catalyzes the epoxidation of the two terminal alkenes of the geranylgeranyl moiety, which is subsequently cyclized by ltmB, to paspaline. The cytochrome P450 monooxygenases ltmQ and ltmP can sequentially oxidize paspaline to terpendole E and terpendole F. Alternatively, ltmP converts paspaline to an intermediate which is oxidized by ltmQ to terpendole F. LtmF, ltmK, ltmE and ltmJ appear to be unique to the epichloe endophytes. The prenyltransferase ltmF is involved in the 27-hydroxyl-O-prenylation. The cytochrome P450 monooxygenase ltmK is required for the oxidative acetal ring formation. The multi-functional prenyltransferase ltmE is required for C20- and C21-prenylations of the indole ring of paspalanes and acts together with the cytochrome P450 monooxygenase ltmJ to yield lolitremanes by multiple oxidations and ring closures. The stereoisomer pairs of lolitriol and lolitrem N or lolitrem B and lolitrem F may be attributed to variations in the way in which ring closure can occur under the action of ltmJ. While the major product of this pathway is lolitrem B, the prenyl transferases and cytochrome P450 monooxygenases identified in this pathway have a remarkable versatility in their regio- and stereo-specificities to generate a diverse range of metabolites that are products of a metabolic grid rather than a linear pathway. The polypeptide is Lolitrem B biosynthesis cluster protein S (Epichloe festucae (strain Fl1)).